The sequence spans 184 residues: GTP cyclohydrolase 1 (184 aa).

Zn(2+) is bound by residues Cys75, His78, and Cys146.

Belongs to the GTP cyclohydrolase I family. In terms of assembly, homomer.

The enzyme catalyses GTP + H2O = 7,8-dihydroneopterin 3'-triphosphate + formate + H(+). Its pathway is cofactor biosynthesis; 7,8-dihydroneopterin triphosphate biosynthesis; 7,8-dihydroneopterin triphosphate from GTP: step 1/1. This chain is GTP cyclohydrolase 1, found in Streptococcus pneumoniae (strain ATCC 700669 / Spain 23F-1).